The following is a 396-amino-acid chain: Transcription factor E2FC (396 aa).

The span at 34 to 48 (PRYSSLTPSSTNRPF) shows a compositional bias: polar residues. The disordered stretch occupies residues 34–57 (PRYSSLTPSSTNRPFSVSQSLPNS). Residues 155–220 (RYDSSLGLLT…TTKNHIRWKG (66 aa)) mediate DNA binding. Residues 226–268 (QKDLGDQISRLKSEVESMQSEESRLDDLIRERQEALRSLEEDD) are a coiled coil. The tract at residues 236-264 (LKSEVESMQSEESRLDDLIRERQEALRSL) is leucine-zipper. The interval 376–391 (DYWFESDAEVSLTDLW) is retinoblastoma protein binding.

It belongs to the E2F/DP family. As to quaternary structure, heterodimer with DP proteins. Interacts preferentially with DPB, but also with DPA. No interaction with DPB when phosphorylated. Interacts with SKP2A, CDKA-1 and maize retinoblastoma-related protein RBR1. Component of a DREAM-like complex which modulates a variety of developmentally regulated genes and of the mitotic genes in proliferating and differentiated cells. Interacts with MYB3R3 at later stages of leaves development. In terms of processing, phosphorylated by cyclin-dependent kinase. Phosphorylation is necessary to target E2FC for proteolysis. In terms of tissue distribution, expressed in meristematic areas, vascular tissues, apical part of the roots, cotyledons, upper region of the hypocotyls, trichomes, young flower buds and pollen grains.

The protein localises to the cytoplasm. Functionally, involved in transcriptional repression. May act by repressing E2F-regulated genes in mature differentiated cells, but is not an antagonist of E2FA. Restricts cell division and is involved in the coordination between cell proliferation and endoreduplication during development. May play a role during the transition from skotomorphogenesis to photomorphogenesis. Regulated by phosphorylation-dependent proteolysis via the protein-ubiquitin ligase SCF(SKP2A) complex. The protein is Transcription factor E2FC (E2FC) of Arabidopsis thaliana (Mouse-ear cress).